Here is a 272-residue protein sequence, read N- to C-terminus: Tryptophan synthase alpha chain (272 aa).

Active-site proton acceptor residues include Glu53 and Asp64.

Belongs to the TrpA family. As to quaternary structure, tetramer of two alpha and two beta chains.

It carries out the reaction (1S,2R)-1-C-(indol-3-yl)glycerol 3-phosphate + L-serine = D-glyceraldehyde 3-phosphate + L-tryptophan + H2O. Its pathway is amino-acid biosynthesis; L-tryptophan biosynthesis; L-tryptophan from chorismate: step 5/5. The alpha subunit is responsible for the aldol cleavage of indoleglycerol phosphate to indole and glyceraldehyde 3-phosphate. The polypeptide is Tryptophan synthase alpha chain (Xanthomonas campestris pv. campestris (strain 8004)).